The following is a 646-amino-acid chain: MEKLSYTFSQQYEEKIRPCIDTIDNLRSLGVEKDLALPAIAVIGDQSSGKSSVLEALSGVPLPRGSGIVTRCPLELKMIRTKDQDRWHGRISYKTCEEDFDDPAEVEKKIRQAQDEMAGAGVGISEELISLQITSADVPDLTLIDLPGIARVAVKGQPENIGDQIKRLIRKFVTRQETINLVVVPCNVDIATTEALQMAQAEDPDGERTLGILTKPDLVDKGTEGTVVDIVHNEVIHLTKGYMIVRCRGQKEIMDQVTLNEATETESAFFKDHPHFSKLYEEGFATIPKLAEKLTIELVHHIQKSLPRLEEQIETKLAETQKELEAYGNGPPSEPAARLSFFIDKVTAFNQDMLNLTTGEDVKCTTDLLLFPELRQEFAKWSHILDRSGDSFNKKIEKEVDNYEVKYRGRELPGFINYKTFEGLVRDQIKLLEEPALKTLKTVSDVVRKKFIQLAQCSFIGFPNLLKIAKTKIEGIKLNKESLAESMLKTQFKMELIVYSQDGTYSQSLKHAKDKLEEMEKERPQPKIKLPLLSSFDLGTDNHATLREMRLHLKSYYTIASKRLADQIPMVIRYMLLQEAALELQRNMLQLLQDKDGVDNLLKEDCDIGQKRENLLSRQTRLIEGTQPLGHLLEVTFIDYCNILMQ.

A Dynamin-type G domain is found at 34–307 (DLALPAIAVI…LVHHIQKSLP (274 aa)). The tract at residues 44–51 (GDQSSGKS) is G1 motif. Residue 44-51 (GDQSSGKS) coordinates GTP. The tract at residues 69 to 71 (VTR) is G2 motif. Residues 145 to 148 (DLPG) form a G3 motif region. GTP-binding positions include 145–149 (DLPGI) and 214–217 (TKPD). The interval 214 to 217 (TKPD) is G4 motif. Residues 246–249 (RCRG) form a G5 motif region. In terms of domain architecture, GED spans 546 to 637 (LREMRLHLKS…PLGHLLEVTF (92 aa)).

The protein belongs to the TRAFAC class dynamin-like GTPase superfamily. Dynamin/Fzo/YdjA family.

Its subcellular location is the cytoplasm. This Danio rerio (Zebrafish) protein is Interferon-induced GTP-binding protein MxA (mxa).